The sequence spans 84 residues: Large ribosomal subunit protein bL27 (84 aa).

Residues 1-25 (MAHKKAGGSSKNGRDSAGKRLGVKR) are disordered.

The protein belongs to the bacterial ribosomal protein bL27 family.

This is Large ribosomal subunit protein bL27 from Syntrophotalea carbinolica (strain DSM 2380 / NBRC 103641 / GraBd1) (Pelobacter carbinolicus).